The sequence spans 130 residues: Small ribosomal subunit protein uS8 (130 aa).

It belongs to the universal ribosomal protein uS8 family. As to quaternary structure, part of the 30S ribosomal subunit. Contacts proteins S5 and S12.

Its function is as follows. One of the primary rRNA binding proteins, it binds directly to 16S rRNA central domain where it helps coordinate assembly of the platform of the 30S subunit. The chain is Small ribosomal subunit protein uS8 from Vibrio cholerae serotype O1 (strain ATCC 39541 / Classical Ogawa 395 / O395).